The primary structure comprises 680 residues: Trehalase (680 aa).

The disordered stretch occupies residues 1-27; that stretch reads MVLHAQPPDQSTETAREAKALAGATDG.

Belongs to the glycosyl hydrolase 15 family. Homomultimer. Phosphate is required as a cofactor.

It catalyses the reaction alpha,alpha-trehalose + H2O = alpha-D-glucose + beta-D-glucose. Its pathway is glycan degradation; trehalose degradation; D-glucose from alpha,alpha-trehalose: step 1/1. Functionally, catalyzes the hydrolysis of alpha,alpha-trehalose into two molecules of D-glucose. The chain is Trehalase from Mycobacterium tuberculosis (strain ATCC 25618 / H37Rv).